The chain runs to 158 residues: uncharacterized protein (158 aa).

The HTH asnC-type domain occupies 12 to 73; that stretch reads LDEIDRAILR…LINPFKAGYE (62 aa). A DNA-binding region (H-T-H motif) is located at residues 31–50; it reads YSEISRRINVPESTVRARVN.

This is an uncharacterized protein from Pyrococcus abyssi (strain GE5 / Orsay).